The following is a 286-amino-acid chain: MPFTGATRVLGIIGQPVSHSLSPLMQNAALQAMGLDYAYVPFAVEEDCLADAVRGLAALGVVGFNVTIPHKSAILPLLDRLSPEAELIGAANVVKREGSDLVGYNTDGTGFIQSLSEDLGFTPAGCRILVMGAGGAARAAVASLAGAGAASVVIANRSIARGEELSAAFRRHFIGTQFAAIPLDPENLNRCVQNFDLLVNTSSVGMGGTAFPGMDLSRMGPHGAVYDMVYVPAVTPLLAEAERCGIRYANGIGMLAAQGECALELWTGVRPPEGLMKACLMAALMS.

Shikimate contacts are provided by residues 20–22 and Thr-67; that span reads SLS. Lys-71 (proton acceptor) is an active-site residue. Residues Asn-92 and Asp-107 each coordinate shikimate. NADP(+)-binding positions include 132–136 and Met-228; that span reads GAGGA. Residue Tyr-230 coordinates shikimate. Gly-251 is a binding site for NADP(+).

The protein belongs to the shikimate dehydrogenase family. As to quaternary structure, homodimer.

The catalysed reaction is shikimate + NADP(+) = 3-dehydroshikimate + NADPH + H(+). It participates in metabolic intermediate biosynthesis; chorismate biosynthesis; chorismate from D-erythrose 4-phosphate and phosphoenolpyruvate: step 4/7. In terms of biological role, involved in the biosynthesis of the chorismate, which leads to the biosynthesis of aromatic amino acids. Catalyzes the reversible NADPH linked reduction of 3-dehydroshikimate (DHSA) to yield shikimate (SA). The sequence is that of Shikimate dehydrogenase (NADP(+)) from Geobacter sulfurreducens (strain ATCC 51573 / DSM 12127 / PCA).